A 797-amino-acid chain; its full sequence is RAS guanyl-releasing protein 1 (797 aa).

Positions 1–12 (MGTLGKAREAPR) are enriched in basic and acidic residues. The disordered stretch occupies residues 1–23 (MGTLGKAREAPRKPSHGCRAASK). The region spanning 53-176 (LGHLAKGASL…RLIDTTQINA (124 aa)) is the N-terminal Ras-GEF domain. The tract at residues 57–110 (AKGASLDDLIDSCIQSFDADGNLCRSNQLLQVMLTMHRIVISSAELLQKVITLY) is ras exchanger motif region; required for transforming activity. Thr184 is subject to Phosphothreonine; by PKC. The Ras-GEF domain maps to 205 to 436 (EPEELSEHLT…YELSYAREPR (232 aa)). EF-hand domains are found at residues 470 to 505 (HVQR…FPFS) and 506 to 532 (FCVM…ASSI). The Ca(2+) site is built by Asp483, Asp485, Asp487, Tyr489, and Glu494. The Phorbol-ester/DAG-type zinc-finger motif lies at 541–591 (PHNFQETTYLKPTFCDNCAGFLWGVIKQGYRCKDCGMNCHKQCKDLVVFEC). Residues 673-694 (TQTESQPWIGSEGPSGPFVLSS) are disordered. The interval 686-694 (PSGPFVLSS) is suppress the PT region-mediated translocation to plasma membrane. Residues 718–797 (LVRKRAFVKW…LAQMEQGDCS (80 aa)) are PT region; mediates the BCR-dependent translocation to plasma membrane. The stretch at 746–786 (PTYQELEQEINTLKADNDALKIQLKYAQKKIESLQLEKSNH) forms a coiled coil.

This sequence belongs to the RASGRP family. In terms of assembly, homodimer. Forms a signaling complex with DGKZ and HRAS. Interacts with F-actin. Interacts with SKAP1. As to expression, expressed in brain with higher expression in cerebellum, cerebral cortex and amygdala. Expressed in the hematopoietic system. Expressed in T-cells (at protein level). Expressed in NK cells (at protein level).

The protein resides in the cytoplasm. It is found in the cytosol. Its subcellular location is the cell membrane. It localises to the golgi apparatus membrane. The protein localises to the endoplasmic reticulum membrane. Its activity is regulated as follows. Autoinhibited. Activated by diacylglycerol and calcium binding, which induces a conformational change releasing the autoinhibitory state. Regulated by DGKA. Regulated by DGKZ. Regulated by PLC gamma and F-actin polymerization. Functions as a calcium- and diacylglycerol (DAG)-regulated nucleotide exchange factor specifically activating Ras through the exchange of bound GDP for GTP. Activates the Erk/MAP kinase cascade. Regulates T-cell/B-cell development, homeostasis and differentiation by coupling T-lymphocyte/B-lymphocyte antigen receptors to Ras. Regulates NK cell cytotoxicity and ITAM-dependent cytokine production by activation of Ras-mediated ERK and JNK pathways. Functions in mast cell degranulation and cytokine secretion, regulating FcERI-evoked allergic responses. May also function in differentiation of other cell types. The polypeptide is RAS guanyl-releasing protein 1 (RASGRP1) (Homo sapiens (Human)).